The sequence spans 159 residues: Ribosomal RNA large subunit methyltransferase H (159 aa).

Residues Leu-76, Gly-108, and 127–132 each bind S-adenosyl-L-methionine; that span reads FGLLTL.

Belongs to the RNA methyltransferase RlmH family. In terms of assembly, homodimer.

It localises to the cytoplasm. The catalysed reaction is pseudouridine(1915) in 23S rRNA + S-adenosyl-L-methionine = N(3)-methylpseudouridine(1915) in 23S rRNA + S-adenosyl-L-homocysteine + H(+). Specifically methylates the pseudouridine at position 1915 (m3Psi1915) in 23S rRNA. This Streptococcus pyogenes serotype M18 (strain MGAS8232) protein is Ribosomal RNA large subunit methyltransferase H.